The sequence spans 351 residues: Photosystem II D2 protein (351 aa).

Residues 39 to 59 (CSYLALGAWFTGTTFVTSWYT) traverse the membrane as a helical segment. H116 serves as a coordination point for chlorophyll a. A helical transmembrane segment spans residues 123-139 (GFCLRQFEIARLVGLRP). Q128 and N141 together coordinate pheophytin a. A helical membrane pass occupies residues 151–164 (VFVSVFLLYPLGQA). Residue H196 coordinates chlorophyll a. The helical transmembrane segment at 206–226 (GALLCAIHGATVQNTLFEDGE) threads the bilayer. Residues H213 and F260 each contribute to the a plastoquinone site. Residue H213 participates in Fe cation binding. H267 is a Fe cation binding site. Residues 277–293 (GLWASSIGIVGLALNLR) form a helical membrane-spanning segment.

This sequence belongs to the reaction center PufL/M/PsbA/D family. As to quaternary structure, PSII is composed of 1 copy each of membrane proteins PsbA, PsbB, PsbC, PsbD, PsbE, PsbF, PsbH, PsbI, PsbJ, PsbK, PsbL, PsbM, PsbT, PsbX, PsbY, PsbZ, Psb30/Ycf12, at least 3 peripheral proteins of the oxygen-evolving complex and a large number of cofactors. It forms dimeric complexes. Requires The D1/D2 heterodimer binds P680, chlorophylls that are the primary electron donor of PSII, and subsequent electron acceptors. It shares a non-heme iron and each subunit binds pheophytin, quinone, additional chlorophylls, carotenoids and lipids. There is also a Cl(-1) ion associated with D1 and D2, which is required for oxygen evolution. The PSII complex binds additional chlorophylls, carotenoids and specific lipids. as cofactor.

It is found in the plastid. It localises to the chloroplast thylakoid membrane. It catalyses the reaction 2 a plastoquinone + 4 hnu + 2 H2O = 2 a plastoquinol + O2. Functionally, photosystem II (PSII) is a light-driven water:plastoquinone oxidoreductase that uses light energy to abstract electrons from H(2)O, generating O(2) and a proton gradient subsequently used for ATP formation. It consists of a core antenna complex that captures photons, and an electron transfer chain that converts photonic excitation into a charge separation. The D1/D2 (PsbA/PsbD) reaction center heterodimer binds P680, the primary electron donor of PSII as well as several subsequent electron acceptors. D2 is needed for assembly of a stable PSII complex. The protein is Photosystem II D2 protein of Cyanidioschyzon merolae (strain NIES-3377 / 10D) (Unicellular red alga).